Here is a 213-residue protein sequence, read N- to C-terminus: Outer-membrane lipoprotein carrier protein (213 aa).

The N-terminal stretch at 1–23 (MKKLLKQSLLGFALVSMTGAAFA) is a signal peptide.

This sequence belongs to the LolA family. As to quaternary structure, monomer.

It localises to the periplasm. Participates in the translocation of lipoproteins from the inner membrane to the outer membrane. Only forms a complex with a lipoprotein if the residue after the N-terminal Cys is not an aspartate (The Asp acts as a targeting signal to indicate that the lipoprotein should stay in the inner membrane). This chain is Outer-membrane lipoprotein carrier protein, found in Actinobacillus pleuropneumoniae serotype 7 (strain AP76).